Here is a 497-residue protein sequence, read N- to C-terminus: Reticulophagy regulator 1 (497 aa).

The tract at residues 1-51 is disordered; that stretch reads MASPAPPEHAEEGCPAPAAEEQAPPSPPPPQASPAERQQQEEEAQEAGAAE. Residues 1 to 59 lie on the Cytoplasmic side of the membrane; it reads MASPAPPEHAEEGCPAPAAEEQAPPSPPPPQASPAERQQQEEEAQEAGAAEGAGLQVEE. Over residues 13–23 the composition is skewed to low complexity; sequence GCPAPAAEEQA. A helical transmembrane segment spans residues 60–80; the sequence is AAGRAAAAVTWLLGEPVLWLG. Topologically, residues 81 to 95 are lumenal; that stretch reads CRADELLSWKRPLRS. The reticulon homology domain stretch occupies residues 84 to 233; sequence DELLSWKRPL…LLCAFLCPLF (150 aa). A helical membrane pass occupies residues 96-116; that stretch reads LLGFVAANLLFWFLALTPWRV. Topologically, residues 117–118 are cytoplasmic; it reads YH. Residues 119–139 form a helical membrane-spanning segment; sequence LISVMILGRVIMQIIKDMVLS. Over 140–208 the chain is Lumenal; sequence RTRGAQLWRS…LVCSVCTFFT (69 aa). Phosphoserine is present on Ser-149. A Phosphoserine; by CAMK2B modification is found at Ser-151. Residue Ser-153 is modified to Phosphoserine. A helical membrane pass occupies residues 209–229; sequence ILGSYIPGVILSYLLLLCAFL. Over 230–497 the chain is Cytoplasmic; that stretch reads CPLFKCNDIG…GFLSNLLGGH (268 aa). Residues 319–330 show a composition bias toward polar residues; sequence FNLSEGYTPQTD. Disordered regions lie at residues 319–365, 377–396, 436–455, and 468–497; these read FNLS…EDEL, KEQL…AAGL, LSQA…GDDF, and SELG…LGGH. Basic and acidic residues-rich tracts occupy residues 334–348 and 377–388; these read DLDR…RDLS and KEQLDSGHRPSK. Positions 443 to 455 are enriched in acidic residues; it reads PEEDTDTEEGDDF. An LIR motif motif is present at residues 453-458; it reads DDFELL. Residues 471 to 490 show a composition bias toward polar residues; it reads GLTQDQEAEAQQNKKSSGFL.

The protein belongs to the RETREG family. In terms of assembly, homooligomer; oligomerization is enhanced following endoplasmic reticulum stress and is mediated by the reticulon homology domain. Interacts with ATG8 family modifier proteins MAP1LC3A, MAP1LC3B, MAP1LC3C, GABARAP, GABARAPL1 and GABARAPL2. Shows higher affinity for GABARAPL1 than for MAP1LC3A or MAP1LC3B. In terms of processing, phosphorylation at Ser-151 by CAMK2B enhances oligomerization and membrane scission and reticulophagy activity. As to expression, overexpressed in esophageal squamous cell carcinoma.

The protein resides in the golgi apparatus. It is found in the cis-Golgi network membrane. It localises to the endoplasmic reticulum membrane. Endoplasmic reticulum (ER)-anchored autophagy regulator which mediates ER delivery into lysosomes through sequestration into autophagosomes. Promotes membrane remodeling and ER scission via its membrane bending capacity and targets the fragments into autophagosomes via interaction with ATG8 family proteins. Active under basal conditions. Required for collagen quality control in a LIR motif-dependent manner. Required for long-term survival of nociceptive and autonomic ganglion neurons. In terms of biological role, (Microbial infection) During SARS-CoV-2 infection, RETREG1-mediated reticulophagy is promoted by SARS-CoV-2 ORF3A protein. This induces endoplasmic reticulum stress and inflammatory responses and facilitates viral infection. The chain is Reticulophagy regulator 1 from Homo sapiens (Human).